The following is a 500-amino-acid chain: Lysine--tRNA ligase (500 aa).

Mg(2+) is bound by residues glutamate 410 and glutamate 417.

The protein belongs to the class-II aminoacyl-tRNA synthetase family. In terms of assembly, homodimer. It depends on Mg(2+) as a cofactor.

Its subcellular location is the cytoplasm. It carries out the reaction tRNA(Lys) + L-lysine + ATP = L-lysyl-tRNA(Lys) + AMP + diphosphate. In Shewanella sp. (strain ANA-3), this protein is Lysine--tRNA ligase.